A 634-amino-acid chain; its full sequence is Putative lipase atg15 (634 aa).

Topologically, residues 1-4 (MSIS) are cytoplasmic. The chain crosses the membrane as a helical; Signal-anchor for type II membrane protein span at residues 5-25 (GLLLSVALLPSVVSAHDHVYF). Topologically, residues 26–634 (DPPSSGSPFL…CVGSTGTELR (609 aa)) are lumenal. N-linked (GlcNAc...) asparagine glycosylation is found at Asn150, Asn185, Asn207, Asn265, and Asn289. Ser305 functions as the Charge relay system in the catalytic mechanism. N-linked (GlcNAc...) asparagine glycosylation occurs at Asn451. The tract at residues 518–544 (PTTTTEATPAPSVTTTIPTPTTYPTSS) is disordered.

Belongs to the AB hydrolase superfamily. Lipase family. In terms of assembly, binds to both phosphatidylinositol (PI) and phosphatidylinositol 3,5-bisphosphate (PIP2).

It is found in the endosome. The protein resides in the multivesicular body membrane. It localises to the prevacuolar compartment membrane. It catalyses the reaction a triacylglycerol + H2O = a diacylglycerol + a fatty acid + H(+). Its function is as follows. Lipase which is essential for lysis of subvacuolar cytoplasm to vacuole targeted bodies and intravacuolar autophagic bodies. Involved in the lysis of intravacuolar multivesicular body (MVB) vesicles. The intravacuolar membrane disintegration by atg15 is critical to life span extension. This Neosartorya fischeri (strain ATCC 1020 / DSM 3700 / CBS 544.65 / FGSC A1164 / JCM 1740 / NRRL 181 / WB 181) (Aspergillus fischerianus) protein is Putative lipase atg15 (atg15).